Consider the following 125-residue polypeptide: Small ribosomal subunit protein uS13 (125 aa).

Positions 92-125 (RRSLPVRGQRTQTNARTRKGKRKTVAGKKKATKK) are disordered. Over residues 107–125 (RTRKGKRKTVAGKKKATKK) the composition is skewed to basic residues.

This sequence belongs to the universal ribosomal protein uS13 family. Part of the 30S ribosomal subunit. Forms a loose heterodimer with protein S19. Forms two bridges to the 50S subunit in the 70S ribosome.

Its function is as follows. Located at the top of the head of the 30S subunit, it contacts several helices of the 16S rRNA. In the 70S ribosome it contacts the 23S rRNA (bridge B1a) and protein L5 of the 50S subunit (bridge B1b), connecting the 2 subunits; these bridges are implicated in subunit movement. Contacts the tRNAs in the A and P-sites. In Chlorobium limicola (strain DSM 245 / NBRC 103803 / 6330), this protein is Small ribosomal subunit protein uS13.